The following is a 212-amino-acid chain: RNA chaperone ProQ (212 aa).

The segment at 107 to 153 is disordered; that stretch reads QDKAKAKRVAQAKSANPAAKTAKKPVKKPVAKRPKQTQSSKPAKEPV. Over residues 117-126 the composition is skewed to low complexity; that stretch reads QAKSANPAAK. The span at 127 to 141 shows a compositional bias: basic residues; the sequence is TAKKPVKKPVAKRPK.

The protein belongs to the ProQ family.

It is found in the cytoplasm. In terms of biological role, RNA chaperone with significant RNA binding, RNA strand exchange and RNA duplexing activities. This chain is RNA chaperone ProQ, found in Shewanella halifaxensis (strain HAW-EB4).